The sequence spans 119 residues: Protein TusC (119 aa).

Belongs to the DsrF/TusC family. In terms of assembly, heterohexamer, formed by a dimer of trimers. The hexameric TusBCD complex contains 2 copies each of TusB, TusC and TusD. The TusBCD complex interacts with TusE.

It is found in the cytoplasm. Functionally, part of a sulfur-relay system required for 2-thiolation of 5-methylaminomethyl-2-thiouridine (mnm(5)s(2)U) at tRNA wobble positions. The protein is Protein TusC of Pectobacterium carotovorum subsp. carotovorum (strain PC1).